Reading from the N-terminus, the 274-residue chain is Large ribosomal subunit protein uL2cz/uL2cy (274 aa).

Disordered regions lie at residues 1–22 (MAIH…DSQV) and 225–252 (PVDH…GYPA).

The protein belongs to the universal ribosomal protein uL2 family. As to quaternary structure, part of the 50S ribosomal subunit.

The protein localises to the plastid. It localises to the chloroplast. In Barbarea verna (Land cress), this protein is Large ribosomal subunit protein uL2cz/uL2cy (rpl2-A).